Reading from the N-terminus, the 185-residue chain is Elongation factor P (185 aa).

It belongs to the elongation factor P family.

The protein resides in the cytoplasm. The protein operates within protein biosynthesis; polypeptide chain elongation. Involved in peptide bond synthesis. Stimulates efficient translation and peptide-bond synthesis on native or reconstituted 70S ribosomes in vitro. Probably functions indirectly by altering the affinity of the ribosome for aminoacyl-tRNA, thus increasing their reactivity as acceptors for peptidyl transferase. This is Elongation factor P from Mesomycoplasma hyopneumoniae (strain J / ATCC 25934 / NCTC 10110) (Mycoplasma hyopneumoniae).